A 194-amino-acid polypeptide reads, in one-letter code: Large ribosomal subunit protein bL9 (194 aa).

The disordered stretch occupies residues 167 to 194 (EDRAAEAEAASDMAAGGAGSFEGDHYES).

This sequence belongs to the bacterial ribosomal protein bL9 family.

Binds to the 23S rRNA. The sequence is that of Large ribosomal subunit protein bL9 from Caulobacter sp. (strain K31).